We begin with the raw amino-acid sequence, 427 residues long: UDP-N-acetyl-D-mannosamine dehydrogenase (427 aa).

Residues Tyr-19, Ile-20, Asp-39, Arg-44, Thr-91, and Thr-130 each coordinate NAD(+). 8 residues coordinate UDP-N-acetyl-alpha-D-mannosaminouronate: Arg-155, Val-156, Lys-207, Asn-211, Arg-214, His-245, Arg-247, and Gly-258. Catalysis depends on Lys-207, which acts as the Proton donor/acceptor. Cys-261 acts as the Nucleophile in catalysis. Residues Tyr-318 and Lys-319 each coordinate UDP-N-acetyl-alpha-D-mannosaminouronate. Residue Arg-326 coordinates NAD(+). Lys-404 serves as a coordination point for UDP-N-acetyl-alpha-D-mannosaminouronate.

The protein belongs to the UDP-glucose/GDP-mannose dehydrogenase family. Homotetramer; probably dimer of dimers.

It catalyses the reaction UDP-N-acetyl-alpha-D-mannosamine + 2 NAD(+) + H2O = UDP-N-acetyl-alpha-D-mannosaminouronate + 2 NADH + 3 H(+). In terms of biological role, catalyzes the four-electron oxidation of UDP-N-acetyl-D-mannosamine (UDP-ManNAc), reducing NAD(+) and releasing UDP-N-acetylmannosaminuronic acid (UDP-ManNAcA). The chain is UDP-N-acetyl-D-mannosamine dehydrogenase (wecC) from Methanococcus maripaludis (strain C7 / ATCC BAA-1331).